Reading from the N-terminus, the 250-residue chain is Protein lin-28 homolog B (250 aa).

2 disordered regions span residues 1 to 27 (MAEA…ESPL) and 98 to 126 (RVTG…KPKG). A compositionally biased stretch (basic and acidic residues) spans 9–18 (GGEEPGRLPE). In terms of domain architecture, CSD spans 29–102 (HGAGHCKWFN…GLESIRVTGP (74 aa)). The segment covering 114–125 (PKGKTVQKRKPK) has biased composition (basic residues). 2 consecutive CCHC-type zinc fingers follow at residues 127 to 144 (DRCY…ECSL) and 149 to 166 (KKCH…NCPH). Zn(2+) is bound by residues Cys129, Cys132, His137, Cys142, Cys151, Cys154, His159, and Cys164. The tract at residues 165–250 (PHKTVSQQPT…GPSVQKRKKT (86 aa)) is disordered. Positions 168-177 (TVSQQPTSSQ) are enriched in polar residues. Over residues 200 to 209 (GYSSPSYSQE) the composition is skewed to low complexity. Over residues 210 to 219 (GRSEISERSG) the composition is skewed to basic and acidic residues.

It belongs to the lin-28 family.

The protein localises to the nucleus. Its subcellular location is the nucleolus. Suppressor of specific microRNA (miRNA) biogenesis. Binds target primary miRNA transcripts and sequester them in the nucleolus, away from the microprocessor complex, hence preventing their processing into mature miRNA. The specific interaction with target pri-miRNAs occurs via an 5'-GGAG-3' motif in the pre-miRNA terminal loop. The chain is Protein lin-28 homolog B (LIN28B) from Gallus gallus (Chicken).